A 543-amino-acid polypeptide reads, in one-letter code: MSIDTDFLTSVEVKEDELHGNVLIAVTQIALGRTIGVIDKATPNDSNALLILNLIKEADDGEDANICMRQEDRKTFLQTSKIINIGERLLLQRLSEEECDEEDQDDLENLILLKDEDRPDSTQSCTKSSSEDSNLNGFEEYIREHGELVPGQTPPDGSHKCGVCPKSFSSASGLKQHSHIHCSLKPFRCHLCPKSYTQFSNLCRHRRVHSDGWTCPTCQSQMPSQAALTKHRPVCEMTALYKPLMAQLAGLSGAGGLGSVPYWPHILQMATQAPHFPLAFLAANPEAYKLMQQTTCASPDAECSSGHASESSPTTTEPVDLTATPKPPSTSEMETTSKSDDGEDRDSIGDSGNDDDDDSEAGVLDESSTTTSTKKRPTSHTISDILAAPQLGAQALNSTFLGMLQRSLNYNPAVPSPHSFLRAMSGAKASSSPSSSSGSGKDRYTCKFCQKVFPRSANLTRHLRTHTGEQPYKCQYCERSFSISSNLQRHVRNIHNKPNTSLTPHNHHRQRSLHNSTSTSTTTTTVHHPLLHLPGTSVPVPKV.

The interval 2-62 (SIDTDFLTSV…NLIKEADDGE (61 aa)) is positive regulatory (PR) domain. 2 C2H2-type zinc fingers span residues 159-181 (HKCGVCPKSFSSASGLKQHSHIH) and 187-209 (FRCHLCPKSYTQFSNLCRHRRVH). The segment at 213–233 (WTCPTCQSQMPSQAALTKHRP) adopts a C2H2-type 3; atypical zinc-finger fold. The tract at residues 299–380 (PDAECSSGHA…TSTKKRPTSH (82 aa)) is disordered. The span at 306–317 (GHASESSPTTTE) shows a compositional bias: polar residues. Residues 335-348 (TTSKSDDGEDRDSI) show a composition bias toward basic and acidic residues. C2H2-type zinc fingers lie at residues 444–466 (YTCKFCQKVFPRSANLTRHLRTH) and 472–495 (YKCQYCERSFSISSNLQRHVRNIH). The tract at residues 496 to 543 (NKPNTSLTPHNHHRQRSLHNSTSTSTTTTTVHHPLLHLPGTSVPVPKV) is disordered. Residues 513–533 (LHNSTSTSTTTTTVHHPLLHL) show a composition bias toward low complexity.

It localises to the nucleus. Probable transcription factor, required for migration of the hermaphrodite-specific motor neurons (HSNs) from the tail to the gonad primordium during HSN cell differentiation. Required for phasmid neuron development. Required to specify the pi-cell fate of ventral uterine precursor cell (VU) cells. Functionally, probable transcription factor, involved in lin-12 (Notch)-dependent anchor cell (AC) and ventral uterine (VU) precursor cell fate specification and in AC invasion. Prevents AC proliferation after AC cell specification by repressing lin-12 expression. May form a positive feedback loop, together with the transcription factor fos-1, that maintains mutual high levels of expression and so activates AC invasion. Its function is as follows. Dispensable for anchor cell (AC) invasion and for preventing AC proliferation. This chain is Zinc finger protein egl-43, found in Caenorhabditis elegans.